Here is a 265-residue protein sequence, read N- to C-terminus: Histidine racemase (265 aa).

Cysteine 67 functions as the Proton acceptor in the catalytic mechanism. Cysteine 209 functions as the Proton donor in the catalytic mechanism.

The protein belongs to the histidine racemase family. In terms of assembly, homodimer.

It carries out the reaction L-histidine = D-histidine. Activity is not affected by buffer composition (PO(4) or Tris), ions (SO(4)(2-), Mg(2+) and EDTA) or the PLP inhibitor hydroxylamine. However, the activity is hindered by iodoacetamide and Hg(2+), which are known inhibitors of enzymes with catalytic thiols. In terms of biological role, cofactor-independent isomerase that catalyzes the reversible conversion of L-histidine to D-histidine. Shows weak activity with L,L-lanthionine. The catalytic turnover is 10'000-fold faster with L-histidine than with L,L-lanthionine. May play a role in growth of F.nucleatum. The protein is Histidine racemase of Fusobacterium nucleatum subsp. nucleatum (strain ATCC 25586 / DSM 15643 / BCRC 10681 / CIP 101130 / JCM 8532 / KCTC 2640 / LMG 13131 / VPI 4355).